The following is a 151-amino-acid chain: MNAYNKADSFSLESDSIKDVIHDYICWLSMTDEMRPSIGNVFKAMETFKIDAVRYYDGNIYDLAKDINAMSFDSFIRSLQNISSKKDKLTVYGTMGLLSIVVDINKGCDISNIKFAAGIIILMEYIFDDTDMSHLKVALYRRIQRRDDVDR.

This sequence belongs to the orthopoxvirus OPG029 family. Interacts with host TANK, TBKBP1 and AZI2; these interactions prevent interferon production. Interacts with host STAT2.

Its function is as follows. Prevents establishment of cellular antiviral state by blocking virus-induced phosphorylation and activation of interferon regulatory factors 3/IRF3 and 7/IRF7, transcription factors critical for the induction of interferons alpha and beta. This blockage is produced through the inhibition of host TBK1, by binding host TBK1 adapter proteins TBKBP1 and AZI2, thereby producing a strong inhibition of the phosphorylation and activation of IRF3 and IRF7. Also acts as an inhibitor of the cellular response to type I IFN by interacting with host STAT2. Mechanistically, exerts its inhibitory effect after host ISGF3 complex (composed of STAT1, STAT2 and IRF9) binding to the interferon stimulated response element (ISRE). The polypeptide is IFN signaling evasion protein OPG029 (OPG029) (Homo sapiens (Human)).